The chain runs to 130 residues: Protein Wnt-9 (130 aa).

Serine 1 carries O-palmitoleoyl serine; by PORCN lipidation. The tract at residues 41 to 69 (AGERTIARSRRRPREQRGQRRPKVSDGAL) is disordered. The segment covering 47-62 (ARSRRRPREQRGQRRP) has biased composition (basic residues). Asparagine 97 carries an N-linked (GlcNAc...) asparagine glycan. An intrachain disulfide couples cysteine 100 to cysteine 111.

Belongs to the Wnt family. Post-translationally, palmitoleoylation is required for efficient binding to frizzled receptors. Depalmitoleoylation leads to Wnt signaling pathway inhibition.

It is found in the secreted. The protein localises to the extracellular space. It localises to the extracellular matrix. Functionally, ligand for members of the frizzled family of seven transmembrane receptors. Probable developmental protein. May be a signaling molecule which affects the development of discrete regions of tissues. Is likely to signal over only few cell diameters. The protein is Protein Wnt-9 (WNT-9) of Eptatretus stoutii (Pacific hagfish).